The following is a 304-amino-acid chain: Ribosomal RNA small subunit methyltransferase H (304 aa).

Residues glycine 36–histidine 38, aspartate 53, phenylalanine 79, aspartate 98, and glutamine 105 contribute to the S-adenosyl-L-methionine site.

The protein belongs to the methyltransferase superfamily. RsmH family.

The protein resides in the cytoplasm. The enzyme catalyses cytidine(1402) in 16S rRNA + S-adenosyl-L-methionine = N(4)-methylcytidine(1402) in 16S rRNA + S-adenosyl-L-homocysteine + H(+). Specifically methylates the N4 position of cytidine in position 1402 (C1402) of 16S rRNA. The sequence is that of Ribosomal RNA small subunit methyltransferase H from Myxococcus xanthus (strain DK1622).